The following is a 197-amino-acid chain: Molybdenum cofactor guanylyltransferase (197 aa).

Residues leucine 10–glycine 12, lysine 23, asparagine 51, aspartate 69, and aspartate 99 each bind GTP. Residue aspartate 99 coordinates Mg(2+).

Belongs to the MobA family. Monomer. It depends on Mg(2+) as a cofactor.

The protein resides in the cytoplasm. It catalyses the reaction Mo-molybdopterin + GTP + H(+) = Mo-molybdopterin guanine dinucleotide + diphosphate. Functionally, transfers a GMP moiety from GTP to Mo-molybdopterin (Mo-MPT) cofactor (Moco or molybdenum cofactor) to form Mo-molybdopterin guanine dinucleotide (Mo-MGD) cofactor. The chain is Molybdenum cofactor guanylyltransferase from Shewanella sp. (strain ANA-3).